A 296-amino-acid chain; its full sequence is Cleavage and polyadenylation specificity factor subunit 4 (296 aa).

5 consecutive C3H1-type zinc fingers follow at residues 35–63 (KSIA…RHIR), 64–91 (GDRT…HEYD), 92–119 (MTKM…HIDP), 120–147 (QSKV…HLRR), and 149–171 (LCMD…HPHF). Residues 189–206 (PTCHYCGELGHKANSCKQ) form a CCHC-type 1 zinc finger. Residues 222–254 (HSGGHSGGYSGHSGHIEGADDMQSNHHSQPHGP) form a disordered region. Residues 266–283 (ITCYKCGNKGHYANKCPK) form a CCHC-type 2 zinc finger.

Component of the cleavage and polyadenylation specificity factor (CPSF) complex, composed of at least Clp, Cpsf73, Cpsf100 and Cpsf160. In terms of tissue distribution, during oogenesis, expression is detected in the germarium, in nurse cells, in the oocyte, and in the somatically derived follicular epithelial cells (at protein level). At oogenesis stage 12, nurse cells degenerate and their content is transferred into the oocyte. In larvae, expressed in all organs and disks (at protein level). In the larval salivary gland, expression is initially confined to cells at the anterior end but later expands throughout the entire gland (at protein level).

The protein resides in the nucleus. Its function is as follows. Component of the cleavage and polyadenylation specificity factor (CPSF) complex that plays a key role in pre-mRNA 3'-end formation, recognizing the AAUAAA signal sequence and interacting with poly(A) polymerase and other factors to bring about cleavage and poly(A) addition. Has endonuclease activity. Binds RNA polymers with a preference for G- and/or C-rich clusters. Binds single-stranded DNA non-specifically. The protein is Cleavage and polyadenylation specificity factor subunit 4 (Clp) of Drosophila melanogaster (Fruit fly).